The primary structure comprises 383 residues: Probable cytosolic iron-sulfur protein assembly protein 1 (383 aa).

WD repeat units follow at residues A10–L49, T56–D108, G135–E175, D182–S221, G228–E275, V302–I341, and H349–I383.

Belongs to the WD repeat CIA1 family. As to quaternary structure, interacts with NAR1.

The protein resides in the cytoplasm. It localises to the nucleus. Functionally, essential component of the cytosolic iron-sulfur (Fe/S) protein assembly machinery. Required for the maturation of extramitochondrial Fe/S proteins. The chain is Probable cytosolic iron-sulfur protein assembly protein 1 from Candida albicans (strain SC5314 / ATCC MYA-2876) (Yeast).